We begin with the raw amino-acid sequence, 370 residues long: 4-hydroxy-3-methylbut-2-en-1-yl diphosphate synthase (flavodoxin) (370 aa).

[4Fe-4S] cluster-binding residues include cysteine 268, cysteine 271, cysteine 303, and glutamate 310.

This sequence belongs to the IspG family. [4Fe-4S] cluster is required as a cofactor.

The catalysed reaction is (2E)-4-hydroxy-3-methylbut-2-enyl diphosphate + oxidized [flavodoxin] + H2O + 2 H(+) = 2-C-methyl-D-erythritol 2,4-cyclic diphosphate + reduced [flavodoxin]. It participates in isoprenoid biosynthesis; isopentenyl diphosphate biosynthesis via DXP pathway; isopentenyl diphosphate from 1-deoxy-D-xylulose 5-phosphate: step 5/6. Converts 2C-methyl-D-erythritol 2,4-cyclodiphosphate (ME-2,4cPP) into 1-hydroxy-2-methyl-2-(E)-butenyl 4-diphosphate. The sequence is that of 4-hydroxy-3-methylbut-2-en-1-yl diphosphate synthase (flavodoxin) from Bacillus anthracis (strain A0248).